The primary structure comprises 177 residues: Large ribosomal subunit protein uL6 (177 aa).

This sequence belongs to the universal ribosomal protein uL6 family. In terms of assembly, part of the 50S ribosomal subunit.

Functionally, this protein binds to the 23S rRNA, and is important in its secondary structure. It is located near the subunit interface in the base of the L7/L12 stalk, and near the tRNA binding site of the peptidyltransferase center. The sequence is that of Large ribosomal subunit protein uL6 from Citrobacter koseri (strain ATCC BAA-895 / CDC 4225-83 / SGSC4696).